The chain runs to 322 residues: UPF0324 membrane protein BB4178 (322 aa).

The next 10 membrane-spanning stretches (helical) occupy residues 13–35, 50–69, 76–98, 108–127, 139–161, 171–193, 209–231, 241–260, 273–292, and 296–318; these read FIRQ…YGNF, FTAR…NISI, GLPG…TVAG, TAML…VLAF, AVAV…VIYH, ALGI…ASNI, VALL…AAGA, VPWF…LDIL, VFVL…FAQI, and GPRV…YGIV.

The protein belongs to the UPF0324 family.

It is found in the cell membrane. This is UPF0324 membrane protein BB4178 from Bordetella bronchiseptica (strain ATCC BAA-588 / NCTC 13252 / RB50) (Alcaligenes bronchisepticus).